The primary structure comprises 182 residues: Segregation and condensation protein B (182 aa).

This sequence belongs to the ScpB family. Homodimer. Homodimerization may be required to stabilize the binding of ScpA to the Smc head domains. Component of a cohesin-like complex composed of ScpA, ScpB and the Smc homodimer, in which ScpA and ScpB bind to the head domain of Smc. The presence of the three proteins is required for the association of the complex with DNA.

The protein localises to the cytoplasm. Functionally, participates in chromosomal partition during cell division. May act via the formation of a condensin-like complex containing Smc and ScpA that pull DNA away from mid-cell into both cell halves. The chain is Segregation and condensation protein B from Staphylococcus saprophyticus subsp. saprophyticus (strain ATCC 15305 / DSM 20229 / NCIMB 8711 / NCTC 7292 / S-41).